Here is a 302-residue protein sequence, read N- to C-terminus: Sulfate adenylyltransferase subunit 2 (302 aa).

It belongs to the PAPS reductase family. CysD subfamily. In terms of assembly, heterodimer composed of CysD, the smaller subunit, and CysN.

The catalysed reaction is sulfate + ATP + H(+) = adenosine 5'-phosphosulfate + diphosphate. Its pathway is sulfur metabolism; hydrogen sulfide biosynthesis; sulfite from sulfate: step 1/3. In terms of biological role, with CysN forms the ATP sulfurylase (ATPS) that catalyzes the adenylation of sulfate producing adenosine 5'-phosphosulfate (APS) and diphosphate, the first enzymatic step in sulfur assimilation pathway. APS synthesis involves the formation of a high-energy phosphoric-sulfuric acid anhydride bond driven by GTP hydrolysis by CysN coupled to ATP hydrolysis by CysD. In Sodalis glossinidius (strain morsitans), this protein is Sulfate adenylyltransferase subunit 2.